The chain runs to 367 residues: Phosphoribosylaminoimidazole-succinocarboxamide synthase (367 aa).

The protein belongs to the SAICAR synthetase family.

It catalyses the reaction 5-amino-1-(5-phospho-D-ribosyl)imidazole-4-carboxylate + L-aspartate + ATP = (2S)-2-[5-amino-1-(5-phospho-beta-D-ribosyl)imidazole-4-carboxamido]succinate + ADP + phosphate + 2 H(+). It functions in the pathway purine metabolism; IMP biosynthesis via de novo pathway; 5-amino-1-(5-phospho-D-ribosyl)imidazole-4-carboxamide from 5-amino-1-(5-phospho-D-ribosyl)imidazole-4-carboxylate: step 1/2. The sequence is that of Phosphoribosylaminoimidazole-succinocarboxamide synthase from Vibrio vulnificus (strain CMCP6).